Consider the following 544-residue polypeptide: Pentatricopeptide repeat-containing protein At1g66345, mitochondrial (544 aa).

Residues 1 to 116 constitute a mitochondrion transit peptide; sequence MASALRRLVE…RNLRHGIKSY (116 aa). 11 PPR repeats span residues 163 to 197, 198 to 232, 233 to 267, 268 to 302, 303 to 337, 338 to 372, 373 to 407, 408 to 442, 443 to 477, 478 to 512, and 513 to 544; these read TPLV…GFTL, SVIT…RIYP, NEIT…RCLP, SVIV…NMVV, DTIG…GFSA, NSFV…GVSP, YDET…GLMP, SCSA…GFVP, DEHT…KMSP, GFEV…LIEP, and NADI…ISVR.

Belongs to the PPR family. P subfamily.

It localises to the mitochondrion. In Arabidopsis thaliana (Mouse-ear cress), this protein is Pentatricopeptide repeat-containing protein At1g66345, mitochondrial.